A 268-amino-acid polypeptide reads, in one-letter code: tRNA pseudouridine synthase A (268 aa).

Asp-63 (nucleophile) is an active-site residue. Position 122 (Tyr-122) interacts with substrate.

This sequence belongs to the tRNA pseudouridine synthase TruA family. As to quaternary structure, homodimer.

The enzyme catalyses uridine(38/39/40) in tRNA = pseudouridine(38/39/40) in tRNA. Its function is as follows. Formation of pseudouridine at positions 38, 39 and 40 in the anticodon stem and loop of transfer RNAs. This is tRNA pseudouridine synthase A from Treponema denticola (strain ATCC 35405 / DSM 14222 / CIP 103919 / JCM 8153 / KCTC 15104).